A 426-amino-acid chain; its full sequence is Serine--tRNA ligase (426 aa).

L-serine is bound at residue 229–231; sequence TAE. 260 to 262 is a binding site for ATP; that stretch reads RSE. Glu-283 contacts L-serine. An ATP-binding site is contributed by 347–350; that stretch reads EIAS. Ser-383 lines the L-serine pocket.

It belongs to the class-II aminoacyl-tRNA synthetase family. Type-1 seryl-tRNA synthetase subfamily. As to quaternary structure, homodimer. The tRNA molecule binds across the dimer.

Its subcellular location is the cytoplasm. It catalyses the reaction tRNA(Ser) + L-serine + ATP = L-seryl-tRNA(Ser) + AMP + diphosphate + H(+). The catalysed reaction is tRNA(Sec) + L-serine + ATP = L-seryl-tRNA(Sec) + AMP + diphosphate + H(+). Its pathway is aminoacyl-tRNA biosynthesis; selenocysteinyl-tRNA(Sec) biosynthesis; L-seryl-tRNA(Sec) from L-serine and tRNA(Sec): step 1/1. Catalyzes the attachment of serine to tRNA(Ser). Is also able to aminoacylate tRNA(Sec) with serine, to form the misacylated tRNA L-seryl-tRNA(Sec), which will be further converted into selenocysteinyl-tRNA(Sec). The chain is Serine--tRNA ligase from Rickettsia bellii (strain OSU 85-389).